The sequence spans 257 residues: Zinc transporter ZupT (257 aa).

A run of 8 helical transmembrane segments spans residues Leu5–Gly25, Val32–Met52, Gly61–Leu81, Ala109–Val129, Leu137–Ala157, Ile171–Ile191, Met195–Leu215, and Gly236–Phe256. Fe(2+)-binding residues include Asn120 and Glu123. Zn(2+) is bound by residues Glu123 and His148. Residues Asn149, Glu152, and Glu181 each contribute to the Fe(2+) site. Glu152 contributes to the Zn(2+) binding site.

This sequence belongs to the ZIP transporter (TC 2.A.5) family. ZupT subfamily.

The protein localises to the cell inner membrane. It catalyses the reaction Zn(2+)(in) = Zn(2+)(out). Functionally, mediates zinc uptake. May also transport other divalent cations. The sequence is that of Zinc transporter ZupT from Enterobacter sp. (strain 638).